A 202-amino-acid chain; its full sequence is Snake venom metalloproteinase Ac1 (202 aa).

The Peptidase M12B domain maps to Arg-6 to Pro-202. Residues Glu-9 and Asp-93 each coordinate Ca(2+). 2 disulfides stabilise this stretch: Cys-117–Cys-197 and Cys-157–Cys-181. His-142 provides a ligand contact to Zn(2+). Glu-143 is an active-site residue. 2 residues coordinate Zn(2+): His-146 and His-152. 2 residues coordinate Ca(2+): Cys-197 and Asn-200.

Belongs to the venom metalloproteinase (M12B) family. P-I subfamily. As to quaternary structure, monomer. The cofactor is Zn(2+). Expressed by the venom gland.

It localises to the secreted. Functionally, snake venom metalloproteinase that impairs hemostasis in the envenomed animal. The polypeptide is Snake venom metalloproteinase Ac1 (Deinagkistrodon acutus (Hundred-pace snake)).